Consider the following 575-residue polypeptide: TOX high mobility group box family member 3 (575 aa).

Disordered regions lie at residues 189 to 258 (LGGA…QKPV) and 516 to 575 (QQLQ…VSIF). Over residues 195-214 (SHTSPSPPASKSATPSPSSS) the composition is skewed to low complexity. Residues 222–238 (DANRAIGEKRTAPDSGK) are compositionally biased toward basic and acidic residues. A compositionally biased stretch (basic residues) spans 239-249 (KPKTPKKKKKK). The segment at residues 254-322 (PQKPVSAYAL…EYLKALAAYR (69 aa)) is a DNA-binding region (HMG box). Residues 516–526 (QQLQHMQHQSQ) are compositionally biased toward low complexity. The span at 527–541 (PSPRQHSPVTSQITS) shows a compositional bias: polar residues. Residues 548–575 (SPQPASQQHQPQIQSQTQTQVLPQVSIF) show a composition bias toward low complexity.

As to quaternary structure, homodimer. Interacts (via HGM box) with CITED1 (via C-terminus); the interaction increases estrogen-response element (ERE)-dependent transcription and protection against cell death. Interacts with CREB1 (phosphorylated form). Interacts with CREB1; the interaction is not depolarization dependent. Interacts with CREBBP (via C-terminus).

It localises to the nucleus. Its function is as follows. Transcriptional coactivator of the p300/CBP-mediated transcription complex. Activates transactivation through cAMP response element (CRE) sites. Protects against cell death by inducing antiapoptotic and repressing pro-apoptotic transcripts. Stimulates transcription from the estrogen-responsive or BCL-2 promoters. Required for depolarization-induced transcription activation of the C-FOS promoter in neurons. Associates with chromatin to the estrogen-responsive C3 promoter region. The chain is TOX high mobility group box family member 3 (Tox3) from Mus musculus (Mouse).